The following is a 98-amino-acid chain: MSEQKLRIGEIRYEVFDDYDPLTEEYLGKNLANAYFIAQIKKENVVQVGNRKINYSSDVKIGFDAFGEETKEKIKEYLLAAYSLIAEGAKDDGLVEYL.

This Bacillus subtilis (strain 168) protein is SPbeta prophage-derived uncharacterized protein YorB (yorB).